The sequence spans 93 residues: Small ribosomal subunit protein uS19 (93 aa).

The protein belongs to the universal ribosomal protein uS19 family.

In terms of biological role, protein S19 forms a complex with S13 that binds strongly to the 16S ribosomal RNA. The protein is Small ribosomal subunit protein uS19 of Kocuria rhizophila (strain ATCC 9341 / DSM 348 / NBRC 103217 / DC2201).